A 304-amino-acid polypeptide reads, in one-letter code: Ubiquitin thioesterase OTU1 (304 aa).

Residues 5–83 form a UBX-like region; the sequence is RCKTREGTQL…IVEEDKSKLR (79 aa). In terms of domain architecture, OTU spans 105–230; it reads IVRRVVPADN…GIHYDPLQRQ (126 aa). Residues 110–116 form a cys-loop region; sequence VPADNSC. Aspartate 113 is a catalytic residue. The Nucleophile role is filled by cysteine 116. The tract at residues 169-179 is variable-loop; sequence IRREDTWGGAI. The segment at 219-223 is his-loop; the sequence is YDGIH. Isoleucine 222 contributes to the substrate binding site. Residue histidine 223 is part of the active site. The tract at residues 247 to 252 is S2 site; that stretch reads DEALVQ. A C2H2-type zinc finger spans residues 274–298; the sequence is LRCMACQKGLTGQSAARDHAKETGH. Histidine 298 is a catalytic residue.

Its subcellular location is the cytoplasm. The catalysed reaction is Thiol-dependent hydrolysis of ester, thioester, amide, peptide and isopeptide bonds formed by the C-terminal Gly of ubiquitin (a 76-residue protein attached to proteins as an intracellular targeting signal).. Functionally, hydrolase that can remove conjugated ubiquitin from proteins and participates in endoplasmic reticulum-associated degradation (ERAD) for misfolded lumenal proteins. May act by triming the ubiquitin chain on the associated substrate to facilitate their threading through the VCP/p97 pore. Ubiquitin moieties on substrates may present a steric impediment to the threading process when the substrate is transferred to the VCP pore and threaded through VCP's axial channel. Mediates deubiquitination of 'Lys-27'-, 'Lys-29'- and 'Lys-33'-linked polyubiquitin chains. Also able to hydrolyze 'Lys-11'-linked ubiquitin chains. Cleaves both polyubiquitin and di-ubiquitin. The protein is Ubiquitin thioesterase OTU1 (yod1) of Xenopus laevis (African clawed frog).